A 355-amino-acid polypeptide reads, in one-letter code: DNA polymerase IV (355 aa).

Positions 7–188 constitute a UmuC domain; sequence IIHIDMDCFY…LPVRKLFGVG (182 aa). The Mg(2+) site is built by aspartate 11 and aspartate 106. The active site involves glutamate 107.

It belongs to the DNA polymerase type-Y family. In terms of assembly, monomer. It depends on Mg(2+) as a cofactor.

The protein localises to the cytoplasm. The catalysed reaction is DNA(n) + a 2'-deoxyribonucleoside 5'-triphosphate = DNA(n+1) + diphosphate. Poorly processive, error-prone DNA polymerase involved in untargeted mutagenesis. Copies undamaged DNA at stalled replication forks, which arise in vivo from mismatched or misaligned primer ends. These misaligned primers can be extended by PolIV. Exhibits no 3'-5' exonuclease (proofreading) activity. May be involved in translesional synthesis, in conjunction with the beta clamp from PolIII. This chain is DNA polymerase IV, found in Legionella pneumophila subsp. pneumophila (strain Philadelphia 1 / ATCC 33152 / DSM 7513).